A 699-amino-acid polypeptide reads, in one-letter code: Pollen-specific leucine-rich repeat extensin-like protein 4 (699 aa).

Residues 1 to 39 (MPFYKQPWVFSKVFVLAMAKPPSFGCCFFLLFFSFLSSS) form the signal peptide. Asparagine 106 carries an N-linked (GlcNAc...) asparagine glycan. LRR repeat units lie at residues 133–157 (VTVVAGVDLNGADIAGHLPAELGLM), 158–180 (TDVAMFHLNSNRFCGIIPKSFEK), 182–205 (KLMHEFDVSNNRFVGPFPNVVLSW), 206–229 (PDVKYFDLRFNDFEGQVPPELFKK), 231–251 (LDAIFLNDNRFTSVIPESLGE), 253–275 (PASVVTFANNKFTGCIPKSIGNM), 276–299 (KNLNEIVFMDNDLGGCFPSEIGKL), 301–323 (NVTVFDASKNSFIGRLPTSFVGL), and 324–347 (TSVEEIDISGNKLTGLVPHNICQL). A glycan (N-linked (GlcNAc...) asparagine) is linked at asparagine 301. N-linked (GlcNAc...) asparagine glycosylation occurs at asparagine 352. The disordered stretch occupies residues 411 to 699 (KCAGGSSTPS…SPPPPMFAGY (289 aa)). 4 stretches are compositionally biased toward pro residues: residues 421-466 (KPSP…PVPT), 482-504 (KPSPVPSRPVQKPQPPKESPQPD), 518-659 (PPPA…PPAP), and 690-699 (SPPPPMFAGY). Residues 517–699 (SPPPAPVNSP…SPPPPMFAGY (183 aa)) form a contains the Ser-Pro(4) repeats region.

Hydroxylated on proline residues in the S-P-P-P-P repeat. In terms of processing, O-glycosylated on hydroxyprolines. Expressed in flowers, stamen, pollen, and pollinated carpels.

The protein resides in the secreted. The protein localises to the cell wall. Modulates cell morphogenesis by regulating cell wall formation and assembly, and/or growth polarization. In Arabidopsis thaliana (Mouse-ear cress), this protein is Pollen-specific leucine-rich repeat extensin-like protein 4 (PEX4).